A 137-amino-acid chain; its full sequence is MEIKCHRVSGGCAEGPALVTRERISFLGNVDPETGVVVDPAHELYGRSIAGVVLIFPGGKGSTVGSYVIYQLRKRGMAPAAMINLKSEPIVAVGAIISDIPLVDRVPEWILDVKDGTRVVVDARREVVVLPDGSVKV.

Ser62 functions as the Proton acceptor in the catalytic mechanism.

This sequence belongs to the AcnX type II small subunit family. As to quaternary structure, heterodimer composed of a large subunit (PMDh-L) and a small subunit (PMDh-S).

The catalysed reaction is (R)-5-phosphomevalonate = (2E)-3-methyl-5-phosphooxypent-2-enoate + H2O. It functions in the pathway isoprenoid biosynthesis; isopentenyl diphosphate biosynthesis via mevalonate pathway. In terms of biological role, component of a hydro-lyase that catalyzes the dehydration of mevalonate 5-phosphate (MVA5P) to form trans-anhydromevalonate 5-phosphate (tAHMP). Involved in the archaeal mevalonate (MVA) pathway, which provides fundamental precursors for isoprenoid biosynthesis, such as isopentenyl diphosphate (IPP) and dimethylallyl diphosphate (DMAPP). The sequence is that of Phosphomevalonate dehydratase small subunit from Methanothrix thermoacetophila (strain DSM 6194 / JCM 14653 / NBRC 101360 / PT) (Methanosaeta thermophila).